A 129-amino-acid chain; its full sequence is Phosphoribosyl-AMP cyclohydrolase (129 aa).

Mg(2+) is bound at residue aspartate 86. Cysteine 87 is a Zn(2+) binding site. Aspartate 88 and aspartate 90 together coordinate Mg(2+). 2 residues coordinate Zn(2+): cysteine 104 and cysteine 111.

It belongs to the PRA-CH family. As to quaternary structure, homodimer. The cofactor is Mg(2+). It depends on Zn(2+) as a cofactor.

Its subcellular location is the cytoplasm. The enzyme catalyses 1-(5-phospho-beta-D-ribosyl)-5'-AMP + H2O = 1-(5-phospho-beta-D-ribosyl)-5-[(5-phospho-beta-D-ribosylamino)methylideneamino]imidazole-4-carboxamide. It functions in the pathway amino-acid biosynthesis; L-histidine biosynthesis; L-histidine from 5-phospho-alpha-D-ribose 1-diphosphate: step 3/9. In terms of biological role, catalyzes the hydrolysis of the adenine ring of phosphoribosyl-AMP. This Ignicoccus hospitalis (strain KIN4/I / DSM 18386 / JCM 14125) protein is Phosphoribosyl-AMP cyclohydrolase.